Consider the following 227-residue polypeptide: Cytidylate kinase (227 aa).

Glycine 12–threonine 20 contributes to the ATP binding site.

The protein belongs to the cytidylate kinase family. Type 1 subfamily.

It is found in the cytoplasm. The enzyme catalyses CMP + ATP = CDP + ADP. The catalysed reaction is dCMP + ATP = dCDP + ADP. In Shigella boydii serotype 18 (strain CDC 3083-94 / BS512), this protein is Cytidylate kinase.